The sequence spans 466 residues: Ras-GEF domain-containing family member 1C (466 aa).

Positions 1–37 (MPQTLSASDMVTPGSLSPPPTEPTDGEQAGQPLLDGA) are disordered. In terms of domain architecture, N-terminal Ras-GEF spans 34 to 164 (LDGAPSSASL…LLQALHQKLA (131 aa)). Residues 200–446 (DPYTLAQQLT…YLASYESESP (247 aa)) form the Ras-GEF domain.

Its function is as follows. Guanine nucleotide exchange factor (GEF). This chain is Ras-GEF domain-containing family member 1C (RASGEF1C), found in Homo sapiens (Human).